The chain runs to 247 residues: ATP synthase subunit a, chloroplastic (247 aa).

Helical transmembrane passes span 36-56, 95-115, 134-154, 199-219, and 220-240; these read GQVL…SIFG, VPFI…GALV, INTT…AGFS, LVVG…LMLL, and GLFT…AYIG.

Belongs to the ATPase A chain family. As to quaternary structure, F-type ATPases have 2 components, CF(1) - the catalytic core - and CF(0) - the membrane proton channel. CF(1) has five subunits: alpha(3), beta(3), gamma(1), delta(1), epsilon(1). CF(0) has four main subunits: a, b, b' and c.

The protein resides in the plastid. It localises to the chloroplast thylakoid membrane. Key component of the proton channel; it plays a direct role in the translocation of protons across the membrane. The chain is ATP synthase subunit a, chloroplastic from Mesostigma viride (Green alga).